The chain runs to 737 residues: Amino-acid acetyltransferase, mitochondrial (737 aa).

The N-terminal 47 residues, 1–47 (MSRSTVLGWCTQSCRLLQKHDHSFSFPTFNGSPPLKKRRFCDSAAPA), are a transit peptide targeting the mitochondrion. The segment at 43–78 (SAAPAAPRPSIHRPSEYIPHSKSGGEAPQDLGHKAR) is disordered. One can recognise an N-acetyltransferase domain in the interval 558-727 (GEPALTLDDP…YEGVCRAIEP (170 aa)).

The protein belongs to the acetyltransferase family.

It localises to the mitochondrion. The enzyme catalyses L-glutamate + acetyl-CoA = N-acetyl-L-glutamate + CoA + H(+). It participates in amino-acid biosynthesis; L-arginine biosynthesis; N(2)-acetyl-L-ornithine from L-glutamate: step 1/4. N-acetylglutamate synthase involved in arginine biosynthesis. The sequence is that of Amino-acid acetyltransferase, mitochondrial (ARG2) from Coccidioides immitis (strain RS) (Valley fever fungus).